Consider the following 364-residue polypeptide: MEVIDLFKKLLSFPSITPDDAGSLEFIREYLSDFHALWFNKHGVKNLFLYKKFGEGEHLCFAGHVDVVPPGDGWESDPFEPLEKDGFIYARGAQDMKSGVAAFVQAVKEAKVFHGTLSLLLTSDEEGEAKWGTKYALEELERMHMTPQYAIVAEPTCEERFGDAIKIGRRGSINGVIEKIGKQGHAAYPEKAVNPIHKVAQVLPKMAGVDLDSGDEYFAPSKFVITDIRAGMEVTNVTPGRLKMMFNVRNNTKTTMQDVERFVHRYFDGMNYTLKLSQSAKPFLTDPNSKVVQVIDQAIKKMTGITPKHSTAGGTSDARFFAEYGVKTIEFGVKNDTIHAPNERTSKEEVEKLYLVFKEVIRSF.

His-64 lines the Zn(2+) pocket. Asp-66 is an active-site residue. Zn(2+) is bound at residue Asp-95. Residue Glu-125 is the Proton acceptor of the active site. Residues Glu-126, Glu-154, and His-339 each coordinate Zn(2+).

It belongs to the peptidase M20A family. DapE subfamily. Homodimer. Requires Zn(2+) as cofactor. Co(2+) is required as a cofactor.

The enzyme catalyses N-succinyl-(2S,6S)-2,6-diaminopimelate + H2O = (2S,6S)-2,6-diaminopimelate + succinate. Its pathway is amino-acid biosynthesis; L-lysine biosynthesis via DAP pathway; LL-2,6-diaminopimelate from (S)-tetrahydrodipicolinate (succinylase route): step 3/3. Catalyzes the hydrolysis of N-succinyl-L,L-diaminopimelic acid (SDAP), forming succinate and LL-2,6-diaminopimelate (DAP), an intermediate involved in the bacterial biosynthesis of lysine and meso-diaminopimelic acid, an essential component of bacterial cell walls. The protein is Succinyl-diaminopimelate desuccinylase of Nitratiruptor sp. (strain SB155-2).